The primary structure comprises 152 residues: MSEKYVVTWDMLQIHARKLAARLLPAEQWKGIIAVSRGGLVPAALLARELCIRHVDTVCISSYDHDNQREMSVLKRAEGDGEGFIVIDDLVDTGGTAQAIRDMYPKAHFVTIFAKPAGRPLVDDYIIDIPQNTWIEQPWDMGIAYIPPLVKS.

5-phospho-alpha-D-ribose 1-diphosphate contacts are provided by residues Arg37–Gly38, Arg69, and Asp88–Thr96. GMP is bound at residue Arg69. Residue Asp89 participates in Mg(2+) binding. Guanine is bound by residues Asp92 and Ile135. Asp92 and Ile135 together coordinate xanthine. GMP-binding positions include Asp92–Thr96 and Trp134–Ile135.

This sequence belongs to the purine/pyrimidine phosphoribosyltransferase family. XGPT subfamily. In terms of assembly, homotetramer. It depends on Mg(2+) as a cofactor.

It is found in the cell inner membrane. The enzyme catalyses GMP + diphosphate = guanine + 5-phospho-alpha-D-ribose 1-diphosphate. It carries out the reaction XMP + diphosphate = xanthine + 5-phospho-alpha-D-ribose 1-diphosphate. It catalyses the reaction IMP + diphosphate = hypoxanthine + 5-phospho-alpha-D-ribose 1-diphosphate. The protein operates within purine metabolism; GMP biosynthesis via salvage pathway; GMP from guanine: step 1/1. It functions in the pathway purine metabolism; XMP biosynthesis via salvage pathway; XMP from xanthine: step 1/1. In terms of biological role, purine salvage pathway enzyme that catalyzes the transfer of the ribosyl-5-phosphate group from 5-phospho-alpha-D-ribose 1-diphosphate (PRPP) to the N9 position of the 6-oxopurines guanine and xanthine to form the corresponding ribonucleotides GMP (guanosine 5'-monophosphate) and XMP (xanthosine 5'-monophosphate), with the release of PPi. To a lesser extent, also acts on hypoxanthine. The polypeptide is Xanthine-guanine phosphoribosyltransferase (Erwinia tasmaniensis (strain DSM 17950 / CFBP 7177 / CIP 109463 / NCPPB 4357 / Et1/99)).